Consider the following 259-residue polypeptide: Type III pantothenate kinase (259 aa).

Residue Asp-9–Lys-16 participates in ATP binding. Substrate contacts are provided by residues Tyr-93 and Gly-100–Arg-103. Asp-102 serves as the catalytic Proton acceptor. Thr-126 serves as a coordination point for ATP. Thr-190 provides a ligand contact to substrate.

The protein belongs to the type III pantothenate kinase family. Homodimer. NH4(+) serves as cofactor. K(+) is required as a cofactor.

It localises to the cytoplasm. The enzyme catalyses (R)-pantothenate + ATP = (R)-4'-phosphopantothenate + ADP + H(+). It functions in the pathway cofactor biosynthesis; coenzyme A biosynthesis; CoA from (R)-pantothenate: step 1/5. Functionally, catalyzes the phosphorylation of pantothenate (Pan), the first step in CoA biosynthesis. The protein is Type III pantothenate kinase of Burkholderia thailandensis (strain ATCC 700388 / DSM 13276 / CCUG 48851 / CIP 106301 / E264).